We begin with the raw amino-acid sequence, 641 residues long: PWWP domain-containing DNA repair factor 3A (641 aa).

Positions 98–329 are disordered; sequence LNERQGSSSR…LEEDEDDEEP (232 aa). Phosphoserine is present on serine 156. 2 stretches are compositionally biased toward basic and acidic residues: residues 194–203 and 295–307; these read QDREASRKQQ and ADTR…RPLS. Serine 307 carries the phosphoserine modification. Positions 343–404 constitute a PWWP domain; that stretch reads VGMLVWHKYQ…KHFDCKEKQA (62 aa). The segment at 463-486 is disordered; the sequence is TRFPQLSGGDPEEPVAGSPQGRRP.

Belongs to the PWWP3A family. Interacts with TP53BP1 (via BRCT domain); the interaction is not dependent on its phosphorylation status. Binds nucleosomes. Interacts with trimethylated 'Lys-36' of histone H3 (H3K36me3) (in vitro).

Its subcellular location is the nucleus. In terms of biological role, involved in the DNA damage response pathway by contributing to the maintenance of chromatin architecture. Recruited to the vicinity of DNA breaks by TP53BP1 and plays an accessory role to facilitate damage-induced chromatin changes and promoting chromatin relaxation. Required for efficient DNA repair and cell survival following DNA damage. This Bos taurus (Bovine) protein is PWWP domain-containing DNA repair factor 3A (PWWP3A).